Consider the following 474-residue polypeptide: uncharacterized protein (474 aa).

A helical membrane pass occupies residues leucine 3–phenylalanine 23. Residues valine 171 to aspartate 296 form a disordered region. Residues arginine 180–lysine 210 show a composition bias toward basic residues. Polar residues predominate over residues threonine 231 to valine 253. Over residues glutamate 257 to leucine 266 the composition is skewed to acidic residues. The span at valine 267–lysine 281 shows a compositional bias: low complexity. Over residues serine 282 to aspartate 296 the composition is skewed to basic and acidic residues.

It localises to the membrane. This is an uncharacterized protein from Mycoplasma pneumoniae (strain ATCC 29342 / M129 / Subtype 1) (Mycoplasmoides pneumoniae).